The primary structure comprises 260 residues: DNA repair protein RecO (260 aa).

It belongs to the RecO family.

In terms of biological role, involved in DNA repair and RecF pathway recombination. The sequence is that of DNA repair protein RecO from Desulfosudis oleivorans (strain DSM 6200 / JCM 39069 / Hxd3) (Desulfococcus oleovorans).